We begin with the raw amino-acid sequence, 277 residues long: Putative phosphoenolpyruvate synthase regulatory protein (277 aa).

157 to 164 (GVSRSGKT) lines the ADP pocket.

This sequence belongs to the pyruvate, phosphate/water dikinase regulatory protein family. PSRP subfamily.

It carries out the reaction [pyruvate, water dikinase] + ADP = [pyruvate, water dikinase]-phosphate + AMP + H(+). The enzyme catalyses [pyruvate, water dikinase]-phosphate + phosphate + H(+) = [pyruvate, water dikinase] + diphosphate. Its function is as follows. Bifunctional serine/threonine kinase and phosphorylase involved in the regulation of the phosphoenolpyruvate synthase (PEPS) by catalyzing its phosphorylation/dephosphorylation. The protein is Putative phosphoenolpyruvate synthase regulatory protein of Azoarcus sp. (strain BH72).